The sequence spans 103 residues: Integration host factor subunit beta (103 aa).

Belongs to the bacterial histone-like protein family. Heterodimer of an alpha and a beta chain.

Functionally, this protein is one of the two subunits of integration host factor, a specific DNA-binding protein that functions in genetic recombination as well as in transcriptional and translational control. This chain is Integration host factor subunit beta, found in Rhizobium meliloti (strain 1021) (Ensifer meliloti).